The sequence spans 389 residues: MVTVEEIRRAQRAEGPATIMAIGTATPSNCVDQSTYPDYYFRITNSEHKTELKEKFQRMCDKSMIKKRYMHLTEEILKENPNICEYMAPSLDARQDIVVVEVPKLGKEAAQKAIKEWGQPKSKITHLVFCTTSGVDMPGADYQLTKLLGLRSSVKRLMMYQQGCFAGGTVLRLAKDLAENNKGARVLVVCSEITAVTFRGPNDTHLDSLVGQALFGDGAAAIIIGSDPLPGVERPLFELVSASQTLLPDSEGAIDGHLREVGLTFHLLKDVPGLISKNIQKSLVEAFQPLGISDWNSIFWIAHPGGPAILDQVELKLGLKPEKLRATRHVLSEYGNMSSACVLFILDEMRKASSKEGLGTTGEGLEWGVLFGFGPGLTVETVVLHSVST.

Cys164 is an active-site residue.

Belongs to the thiolase-like superfamily. Chalcone/stilbene synthases family.

The catalysed reaction is (E)-4-coumaroyl-CoA + 3 malonyl-CoA + 3 H(+) = 2',4,4',6'-tetrahydroxychalcone + 3 CO2 + 4 CoA. It functions in the pathway secondary metabolite biosynthesis; flavonoid biosynthesis. Its function is as follows. The primary product of this enzyme is 4,2',4',6'-tetrahydroxychalcone (also termed naringenin-chalcone or chalcone) which can under specific conditions spontaneously isomerize into naringenin. This chain is Chalcone synthase J (CHSJ), found in Petunia hybrida (Petunia).